The following is a 6713-amino-acid chain: Extracellular matrix-binding protein EbhA (6713 aa).

44 FIVAR domains span residues 1–58 (MGNL…VEQA), 126–184 (AMGQ…VTAA), 252–310 (AMKG…ITQA), 378–436 (QMGN…VEAA), 504–562 (AMAN…VENA), 630–688 (AMGT…INQI), 756–814 (AMGQ…VDRA), 882–940 (AMNS…VDNA), 1008–1066 (AMGA…INDM), 1134–1192 (AMTA…VNSA), 1260–1318 (AMKG…ITQA), 1386–1444 (AMHS…VEQA), 1512–1570 (AMGQ…VERA), 1638–1696 (AMTA…VTNA), 1764–1822 (AMKG…INQA), 1890–1948 (AMTN…VETA), 2142–2200 (AMNQ…INQK), 2268–2325 (AMGN…VQAA), 2393–2451 (AMGQ…VEAA), 2519–2577 (AMQR…VEQA), 2645–2703 (AMDQ…VTAA), 2771–2829 (AMNQ…VTQA), 2897–2955 (AMER…VEAA), 3023–3081 (AMGN…VEAA), 3149–3207 (AMDK…INQA), 3275–3333 (AMGN…VEQA), 3401–3459 (AMTQ…ITAA), 3527–3585 (AMTQ…IQQA), 3653–3711 (AMTN…VEQA), 3779–3837 (AMTQ…VAQA), 3905–3963 (AMGT…VTKA), 4031–4089 (AMGN…ITRA), 4157–4218 (AMDQ…ITNE), 4283–4341 (AMEL…VNGA), 4409–4467 (AMGN…VEQA), 4535–4592 (AMHG…INQV), 4660–4718 (LMDA…VSSA), 4786–4844 (AMKA…IDQA), 4912–4970 (AMEA…VEQL), 5038–5096 (AMQA…VEQL), 5164–5222 (AMET…VEQA), 5290–5344 (SMDQ…VDQA), 5412–5471 (AMDQ…VIKL), and 5666–5722 (AMET…INGA). Residues 6518-6540 (VIKNAIGVVGISGLLASFWFFIA) traverse the membrane as a helical segment. The interval 6616 to 6713 (RRKEDEEDVE…KKKKSKKNKK (98 aa)) is disordered. Basic and acidic residues-rich tracts occupy residues 6631–6641 (TDEKVLKDNEH) and 6680–6690 (QKDNQSKDKKS). Positions 6695 to 6713 (TSKKVAAKKKKKKSKKNKK) are enriched in basic residues.

The protein resides in the cell membrane. This Staphylococcus aureus (strain Mu3 / ATCC 700698) protein is Extracellular matrix-binding protein EbhA (ebhA).